Consider the following 371-residue polypeptide: Queuine tRNA-ribosyltransferase (371 aa).

The Proton acceptor role is filled by aspartate 90. Residues 90–94, aspartate 144, glutamine 185, and glycine 212 contribute to the substrate site; that span reads DSGGF. Positions 243–249 are RNA binding; that stretch reads GVGTPED. Aspartate 262 acts as the Nucleophile in catalysis. Residues 267–271 are RNA binding; important for wobble base 34 recognition; the sequence is TRNAR. 4 residues coordinate Zn(2+): cysteine 300, cysteine 302, cysteine 305, and histidine 331.

It belongs to the queuine tRNA-ribosyltransferase family. As to quaternary structure, homodimer. Within each dimer, one monomer is responsible for RNA recognition and catalysis, while the other monomer binds to the replacement base PreQ1. Requires Zn(2+) as cofactor.

The enzyme catalyses 7-aminomethyl-7-carbaguanine + guanosine(34) in tRNA = 7-aminomethyl-7-carbaguanosine(34) in tRNA + guanine. It functions in the pathway tRNA modification; tRNA-queuosine biosynthesis. In terms of biological role, catalyzes the base-exchange of a guanine (G) residue with the queuine precursor 7-aminomethyl-7-deazaguanine (PreQ1) at position 34 (anticodon wobble position) in tRNAs with GU(N) anticodons (tRNA-Asp, -Asn, -His and -Tyr). Catalysis occurs through a double-displacement mechanism. The nucleophile active site attacks the C1' of nucleotide 34 to detach the guanine base from the RNA, forming a covalent enzyme-RNA intermediate. The proton acceptor active site deprotonates the incoming PreQ1, allowing a nucleophilic attack on the C1' of the ribose to form the product. After dissociation, two additional enzymatic reactions on the tRNA convert PreQ1 to queuine (Q), resulting in the hypermodified nucleoside queuosine (7-(((4,5-cis-dihydroxy-2-cyclopenten-1-yl)amino)methyl)-7-deazaguanosine). In Acidithiobacillus ferrooxidans (strain ATCC 23270 / DSM 14882 / CIP 104768 / NCIMB 8455) (Ferrobacillus ferrooxidans (strain ATCC 23270)), this protein is Queuine tRNA-ribosyltransferase.